We begin with the raw amino-acid sequence, 244 residues long: Phosphoadenosine 5'-phosphosulfate reductase (244 aa).

Cysteine 239 acts as the Nucleophile; cysteine thiosulfonate intermediate in catalysis.

This sequence belongs to the PAPS reductase family. CysH subfamily.

Its subcellular location is the cytoplasm. The enzyme catalyses [thioredoxin]-disulfide + sulfite + adenosine 3',5'-bisphosphate + 2 H(+) = [thioredoxin]-dithiol + 3'-phosphoadenylyl sulfate. Its pathway is sulfur metabolism; hydrogen sulfide biosynthesis; sulfite from sulfate: step 3/3. Functionally, catalyzes the formation of sulfite from phosphoadenosine 5'-phosphosulfate (PAPS) using thioredoxin as an electron donor. The protein is Phosphoadenosine 5'-phosphosulfate reductase of Photorhabdus laumondii subsp. laumondii (strain DSM 15139 / CIP 105565 / TT01) (Photorhabdus luminescens subsp. laumondii).